Consider the following 279-residue polypeptide: MSIISPQDVKKLREETNAGFGDCKKALSVAGGDFELAKKKLREMGIASAEKRLDRDAKEGRVFSYSNNIHAGLLLVSCETDFVALNHNFVNFGNSLIKELVESGRNSLATSQELELKNLAATIKENIQVKKIFITEIQSNEFVKIYLHGEQSKIGVLVKLKVDDFSKTEDKMLQDFAMDLALHVAALAPIYLRNDDVCPNYIKEQEEIFAKQLELSGKSESIVKGIVAGKIKKHLAEISLLEQGFVKNDKLTVREMLEEVSKAISSKIEIVEFKYLRIG.

The involved in Mg(2+) ion dislocation from EF-Tu stretch occupies residues 80 to 83; it reads TDFV.

This sequence belongs to the EF-Ts family.

Its subcellular location is the cytoplasm. Associates with the EF-Tu.GDP complex and induces the exchange of GDP to GTP. It remains bound to the aminoacyl-tRNA.EF-Tu.GTP complex up to the GTP hydrolysis stage on the ribosome. This is Elongation factor Ts from Borreliella burgdorferi (strain ZS7) (Borrelia burgdorferi).